A 73-amino-acid chain; its full sequence is UPF0435 protein lin1819 (73 aa).

The protein belongs to the UPF0435 family.

This chain is UPF0435 protein lin1819, found in Listeria innocua serovar 6a (strain ATCC BAA-680 / CLIP 11262).